A 371-amino-acid polypeptide reads, in one-letter code: MSIRIAINGYGRIGRSVVRALYENNRQDEMKVVVINELAEPSAIAHLTQYDSTHGRFPFPVNLQNNLLKIKNDDIHLVRFSELADLPWHEHDIDIVLDCTGIYGSRADADAHIAAGAKKVIFSHPADPDVDATVVYGINHQQLTGDETFISGASCTTNCMVPVIDTLDKHFAIKCGTITTIHSAMNDQPVIDAYHSDLRRTRAASQSIIPVDTKLAAGIERILPKFANKFEAIAVRVPTINVTAMDLSITVSKDVTIQEINDCLLKASETNLKDILGYTEAPLVSIDFNHDPRSCIIDGTQTRVSDGNLVKLLVWCDNEWGFANRLLDTSFYLANLAEQKRLQSTETVKSLEDTGISNEIKDELQDRRKII.

12–13 (RI) lines the NAD(+) pocket. Residues 154–156 (SCT), R200, 213–214 (TK), and R236 contribute to the substrate site. The Nucleophile role is filled by C155. N318 serves as a coordination point for NAD(+).

Belongs to the glyceraldehyde-3-phosphate dehydrogenase family. Epd subfamily. As to quaternary structure, homotetramer.

It is found in the cytoplasm. The catalysed reaction is D-erythrose 4-phosphate + NAD(+) + H2O = 4-phospho-D-erythronate + NADH + 2 H(+). Its pathway is cofactor biosynthesis; pyridoxine 5'-phosphate biosynthesis; pyridoxine 5'-phosphate from D-erythrose 4-phosphate: step 1/5. In terms of biological role, catalyzes the NAD-dependent conversion of D-erythrose 4-phosphate to 4-phosphoerythronate. This Psychromonas ingrahamii (strain DSM 17664 / CCUG 51855 / 37) protein is D-erythrose-4-phosphate dehydrogenase.